The chain runs to 222 residues: 7-cyano-7-deazaguanine synthase (222 aa).

9-19 contributes to the ATP binding site; sequence ISGGMDSALSA. Zn(2+) is bound by residues Cys188, Cys196, Cys199, and Cys202.

Belongs to the QueC family. Requires Zn(2+) as cofactor.

The enzyme catalyses 7-carboxy-7-deazaguanine + NH4(+) + ATP = 7-cyano-7-deazaguanine + ADP + phosphate + H2O + H(+). The protein operates within purine metabolism; 7-cyano-7-deazaguanine biosynthesis. Catalyzes the ATP-dependent conversion of 7-carboxy-7-deazaguanine (CDG) to 7-cyano-7-deazaguanine (preQ(0)). This is 7-cyano-7-deazaguanine synthase from Sulfurovum sp. (strain NBC37-1).